The primary structure comprises 657 residues: Protein kinase and PP2C-like domain-containing protein (657 aa).

The Protein kinase domain occupies 32-327 (FSLLSPIAKG…LKIIEKHIAV (296 aa)). ATP contacts are provided by residues 38–46 (IAKGSESTV) and lysine 59. Aspartate 156 (proton acceptor; for kinase activity) is an active-site residue. Positions 390–647 (SWGSFATCGR…DNITVIVVFL (258 aa)) constitute a PPM-type phosphatase domain. Residues aspartate 426, glycine 427, aspartate 598, and aspartate 638 each contribute to the Mn(2+) site.

The protein in the N-terminal section; belongs to the protein kinase superfamily. Ser/Thr protein kinase family. It in the C-terminal section; belongs to the PP2C family. The cofactor is Mg(2+). Mn(2+) serves as cofactor.

The enzyme catalyses L-seryl-[protein] + ATP = O-phospho-L-seryl-[protein] + ADP + H(+). The catalysed reaction is L-threonyl-[protein] + ATP = O-phospho-L-threonyl-[protein] + ADP + H(+). It catalyses the reaction O-phospho-L-seryl-[protein] + H2O = L-seryl-[protein] + phosphate. It carries out the reaction O-phospho-L-threonyl-[protein] + H2O = L-threonyl-[protein] + phosphate. The polypeptide is Protein kinase and PP2C-like domain-containing protein (Oryza sativa subsp. japonica (Rice)).